Reading from the N-terminus, the 717-residue chain is P-loop NTPase domain-containing protein LPA1 homolog 2 (717 aa).

Disordered stretches follow at residues 235 to 259 (KKLK…SSTT) and 532 to 629 (HYSS…DTIS). Composition is skewed to polar residues over residues 243 to 259 (VNSN…SSTT) and 532 to 545 (HYSS…TSDG). Positions 559–582 (SDEDDEEGDDDFHEPDSDEDLSDN) are enriched in acidic residues. Residues 583-602 (NDERNRDEIGSVDEESTKSD) show a composition bias toward basic and acidic residues.

Its function is as follows. May be not required for the accumulation of phytic acid in seeds. Phytic acid is the primary storage form of phosphorus in cereal grains and other plant seeds. This is P-loop NTPase domain-containing protein LPA1 homolog 2 from Arabidopsis thaliana (Mouse-ear cress).